The following is a 348-amino-acid chain: Chitinase (348 aa).

The first 29 residues, 1–29 (MKLKKIIPAFPLLSTVAVGLWLTPTQASA), serve as a signal peptide directing secretion. Residues 42–348 (KVLVGYWHNW…FATRYSNLVK (307 aa)) form the GH18 domain. Catalysis depends on glutamate 161, which acts as the Proton donor.

This sequence belongs to the glycosyl hydrolase 18 family.

The protein resides in the secreted. It catalyses the reaction Random endo-hydrolysis of N-acetyl-beta-D-glucosaminide (1-&gt;4)-beta-linkages in chitin and chitodextrins.. It functions in the pathway glycan degradation; chitin degradation. Its function is as follows. Involved in chitin degradation. Catalyzes the cleavage of glycosidic linkages in chitooligosaccharides and in alpha- and beta-chitin. Its activity on chitooligosaccharides increases considerably with degrees of polymerization (the initial rate of hydrolysis for GlcNAc5 is about 130-fold higher than that for GlcNAc3). Its activity is greatly stimulated in the presence of the lytic chitin monooxygenase EfCBM33A, which attacks the crystalline structure of chitin and makes the polymer more accessible to the chitinase; combining the two enzymes leads to rapid and complete depolymerization of crystalline chitin, especially with beta-chitin as a substrate. Is likely involved in a chitin degradation pathway that allows E.faecalis V583 to grow on chitin as a carbon source. In Enterococcus faecalis (strain ATCC 700802 / V583), this protein is Chitinase.